The sequence spans 567 residues: Dihydroxy-acid dehydratase 3 (567 aa).

Cys-57 contributes to the [2Fe-2S] cluster binding site. Position 89 (Asp-89) interacts with Mg(2+). Position 130 (Cys-130) interacts with [2Fe-2S] cluster. Mg(2+) is bound by residues Asp-131 and Lys-132. Residue Lys-132 is modified to N6-carboxylysine. Residue Cys-202 coordinates [2Fe-2S] cluster. Glu-454 is a binding site for Mg(2+). The Proton acceptor role is filled by Ser-480.

The protein belongs to the IlvD/Edd family. Homodimer. [2Fe-2S] cluster serves as cofactor. It depends on Mg(2+) as a cofactor.

It carries out the reaction (2R)-2,3-dihydroxy-3-methylbutanoate = 3-methyl-2-oxobutanoate + H2O. It catalyses the reaction (2R,3R)-2,3-dihydroxy-3-methylpentanoate = (S)-3-methyl-2-oxopentanoate + H2O. Its pathway is amino-acid biosynthesis; L-isoleucine biosynthesis; L-isoleucine from 2-oxobutanoate: step 3/4. It functions in the pathway amino-acid biosynthesis; L-valine biosynthesis; L-valine from pyruvate: step 3/4. Functionally, functions in the biosynthesis of branched-chain amino acids. Catalyzes the dehydration of (2R,3R)-2,3-dihydroxy-3-methylpentanoate (2,3-dihydroxy-3-methylvalerate) into 2-oxo-3-methylpentanoate (2-oxo-3-methylvalerate) and of (2R)-2,3-dihydroxy-3-methylbutanoate (2,3-dihydroxyisovalerate) into 2-oxo-3-methylbutanoate (2-oxoisovalerate), the penultimate precursor to L-isoleucine and L-valine, respectively. The protein is Dihydroxy-acid dehydratase 3 of Aromatoleum aromaticum (strain DSM 19018 / LMG 30748 / EbN1) (Azoarcus sp. (strain EbN1)).